Reading from the N-terminus, the 366-residue chain is Tyrosine--tRNA ligase (366 aa).

Positions 41, 167, 171, 174, and 189 each coordinate L-tyrosine. Positions 241–245 (KMSKS) match the 'KMSKS' region motif. Residue K244 coordinates ATP.

Belongs to the class-I aminoacyl-tRNA synthetase family. TyrS type 4 subfamily. Homodimer.

It is found in the cytoplasm. The catalysed reaction is tRNA(Tyr) + L-tyrosine + ATP = L-tyrosyl-tRNA(Tyr) + AMP + diphosphate + H(+). Functionally, catalyzes the attachment of tyrosine to tRNA(Tyr) in a two-step reaction: tyrosine is first activated by ATP to form Tyr-AMP and then transferred to the acceptor end of tRNA(Tyr). The polypeptide is Tyrosine--tRNA ligase (Saccharolobus solfataricus (strain ATCC 35092 / DSM 1617 / JCM 11322 / P2) (Sulfolobus solfataricus)).